Here is a 163-residue protein sequence, read N- to C-terminus: UPF0763 protein CJJ81176_1011 (163 aa).

Belongs to the UPF0763 family.

This Campylobacter jejuni subsp. jejuni serotype O:23/36 (strain 81-176) protein is UPF0763 protein CJJ81176_1011.